A 256-amino-acid polypeptide reads, in one-letter code: MGTDVWVGSWRPHRPRGPIAALYSSPGPKYSLPGNTGFVSHDPSRYRAPAYSMGNRRFKFVDDCSPGPGYLVPSNITVKGKDGTPAYSIYGRPKDISSFRTPGPGSYSPERAGKSAYRSAPTYSLGERTKTFSNDQTPGPAAYVLPSVIGPRIVNRISAPNYSMTGRSKIGSFHEDLQRTPGPGTYRVIDPGSYKHRPPQYSMTARNVLPGDTTIKPGPGAYSPEKVVMSRPQAPNFSFGIRHSDYVAPLIVDVAD.

3 STPGR repeats span residues 66 to 92 (PGPG…IYGR), 181 to 206 (PGPG…MTAR), and 217 to 242 (PGPG…FGIR).

It belongs to the CIMAP family.

It is found in the cytoplasm. Its subcellular location is the cytoskeleton. It localises to the flagellum axoneme. Outer dense fibers are filamentous structures located on the outside of the axoneme in the midpiece and principal piece of the mammalian sperm tail. May help to maintain the passive elastic structures and elastic recoil of the sperm tail. The chain is Ciliary microtubule associated protein 1A (cimap1a) from Xenopus tropicalis (Western clawed frog).